The chain runs to 237 residues: MNIFDRKINFDALLKFSHITPSTQQHLKKVYASFALCMFVAAAGAYVHMVTHFIQAGLLSALGSLILMIWLMATPHSHETEQKRLGLLAGFAFLTGVGLGPALEFCIAVNPSILPTAFMGTAMIFTCFTLSALYARRRSYLFLGGILMSALSLLLLSSLGNVFFGSIWLFQANLYVGLVVMCGFVLFDTQLIIEKAEHGDQDYIWHCIDLFLDFITVFRKLMMILAMNEKDKKKEKK.

The Cytoplasmic segment spans residues 1–29 (MNIFDRKINFDALLKFSHITPSTQQHLKK). K7 participates in a covalent cross-link: Glycyl lysine isopeptide (Lys-Gly) (interchain with G-Cter in ubiquitin). A helical transmembrane segment spans residues 30-50 (VYASFALCMFVAAAGAYVHMV). The Lumenal segment spans residues 51–52 (TH). Residues 53-73 (FIQAGLLSALGSLILMIWLMA) traverse the membrane as a helical segment. Over 74–86 (TPHSHETEQKRLG) the chain is Cytoplasmic. A helical transmembrane segment spans residues 87–107 (LLAGFAFLTGVGLGPALEFCI). Residues 108–112 (AVNPS) lie on the Lumenal side of the membrane. The helical transmembrane segment at 113 to 133 (ILPTAFMGTAMIFTCFTLSAL) threads the bilayer. Residues 134–139 (YARRRS) lie on the Cytoplasmic side of the membrane. The helical transmembrane segment at 140 to 160 (YLFLGGILMSALSLLLLSSLG) threads the bilayer. Residues 161–166 (NVFFGS) lie on the Lumenal side of the membrane. Residues 167–187 (IWLFQANLYVGLVVMCGFVLF) form a helical membrane-spanning segment. At 188-206 (DTQLIIEKAEHGDQDYIWH) the chain is on the cytoplasmic side. Residues 207 to 227 (CIDLFLDFITVFRKLMMILAM) constitute an intramembrane region (helical). Residues 228–237 (NEKDKKKEKK) are Cytoplasmic-facing.

This sequence belongs to the BI1 family. Interacts with BCL2 and BCL2L1. Interacts with ERN1. Ubiquitinated by BFAR, leading to proteasomal degradation. As to expression, highly abundant in testis.

The protein localises to the endoplasmic reticulum membrane. Its function is as follows. Endoplasmic reticulum (ER)-resident protein that confers cellular protection as an anti-apoptotic protein by limiting multiple stress-inducing pathways surrounding the endoplasmic reticulum and mitochondria. Inhibits the activities of the key sensor for the endoplasmic reticulum unfolded protein response IRE1alpha/ERN1 both directly and by blocking BAX/BAK binding. Modulates ER calcium homeostasis by acting as a calcium-leak channel. Negatively regulates autophagy and autophagosome formation, especially during periods of nutrient deprivation, and reduces cell survival during starvation. This Homo sapiens (Human) protein is Bax inhibitor 1 (TMBIM6).